Here is a 134-residue protein sequence, read N- to C-terminus: Arsenate reductase (134 aa).

Residues Cys11, Cys83, and Cys90 each act as nucleophile in the active site. 2 disulfides stabilise this stretch: Cys11–Cys83 and Cys83–Cys90.

The protein belongs to the low molecular weight phosphotyrosine protein phosphatase family. Thioredoxin-coupled ArsC subfamily.

The protein resides in the cytoplasm. It carries out the reaction arsenate + [thioredoxin]-dithiol + H(+) = arsenite + [thioredoxin]-disulfide + H2O. In terms of biological role, catalyzes the reduction of arsenate [As(V)] to arsenite [As(III)]. The polypeptide is Arsenate reductase (Brevibacillus brevis (strain 47 / JCM 6285 / NBRC 100599)).